The chain runs to 581 residues: Proline--tRNA ligase (581 aa).

Belongs to the class-II aminoacyl-tRNA synthetase family. ProS type 1 subfamily. In terms of assembly, homodimer.

Its subcellular location is the cytoplasm. It carries out the reaction tRNA(Pro) + L-proline + ATP = L-prolyl-tRNA(Pro) + AMP + diphosphate. Its function is as follows. Catalyzes the attachment of proline to tRNA(Pro) in a two-step reaction: proline is first activated by ATP to form Pro-AMP and then transferred to the acceptor end of tRNA(Pro). As ProRS can inadvertently accommodate and process non-cognate amino acids such as alanine and cysteine, to avoid such errors it has two additional distinct editing activities against alanine. One activity is designated as 'pretransfer' editing and involves the tRNA(Pro)-independent hydrolysis of activated Ala-AMP. The other activity is designated 'posttransfer' editing and involves deacylation of mischarged Ala-tRNA(Pro). The misacylated Cys-tRNA(Pro) is not edited by ProRS. This chain is Proline--tRNA ligase, found in Delftia acidovorans (strain DSM 14801 / SPH-1).